The primary structure comprises 129 residues: MSINHPLSVLLVGAGGFLGTVARYLVALAFSPASPGFPFATFSVNIAGSFLIGFLSELAVSTTIVSPEARLFLVTGFCGGFTTFSSYMFEGATLARDGELFYFSLYLAGSIVGGFVALYTGIIAAKPWS.

4 consecutive transmembrane segments (helical) span residues 10 to 30, 35 to 55, 71 to 91, and 105 to 125; these read LLVG…ALAF, PGFP…IGFL, LFLV…MFEG, and LYLA…IIAA. Positions 79 and 82 each coordinate Na(+).

It belongs to the fluoride channel Fluc/FEX (TC 1.A.43) family.

It is found in the cell inner membrane. It carries out the reaction fluoride(in) = fluoride(out). Its activity is regulated as follows. Na(+) is not transported, but it plays an essential structural role and its presence is essential for fluoride channel function. Functionally, fluoride-specific ion channel. Important for reducing fluoride concentration in the cell, thus reducing its toxicity. The chain is Fluoride-specific ion channel FluC from Chlorobium luteolum (strain DSM 273 / BCRC 81028 / 2530) (Pelodictyon luteolum).